The primary structure comprises 110 residues: Small ribosomal subunit protein bS16 (110 aa).

Residues A87–K110 form a disordered region.

It belongs to the bacterial ribosomal protein bS16 family.

This chain is Small ribosomal subunit protein bS16, found in Rhodopseudomonas palustris (strain BisA53).